Reading from the N-terminus, the 379-residue chain is Protein RecA (379 aa).

ATP is bound at residue 79–86 (GPESSGKT).

The protein belongs to the RecA family.

Its subcellular location is the cytoplasm. Its function is as follows. Can catalyze the hydrolysis of ATP in the presence of single-stranded DNA, the ATP-dependent uptake of single-stranded DNA by duplex DNA, and the ATP-dependent hybridization of homologous single-stranded DNAs. It interacts with LexA causing its activation and leading to its autocatalytic cleavage. In Streptococcus agalactiae serotype III (strain NEM316), this protein is Protein RecA.